Here is a 305-residue protein sequence, read N- to C-terminus: Aspartate carbamoyltransferase catalytic subunit (305 aa).

Positions 58 and 59 each coordinate carbamoyl phosphate. Residue lysine 86 coordinates L-aspartate. Positions 108, 136, and 139 each coordinate carbamoyl phosphate. Arginine 169 and arginine 223 together coordinate L-aspartate. Residues glycine 264 and proline 265 each contribute to the carbamoyl phosphate site.

It belongs to the aspartate/ornithine carbamoyltransferase superfamily. ATCase family. Heterododecamer (2C3:3R2) of six catalytic PyrB chains organized as two trimers (C3), and six regulatory PyrI chains organized as three dimers (R2).

It catalyses the reaction carbamoyl phosphate + L-aspartate = N-carbamoyl-L-aspartate + phosphate + H(+). Its pathway is pyrimidine metabolism; UMP biosynthesis via de novo pathway; (S)-dihydroorotate from bicarbonate: step 2/3. In terms of biological role, catalyzes the condensation of carbamoyl phosphate and aspartate to form carbamoyl aspartate and inorganic phosphate, the committed step in the de novo pyrimidine nucleotide biosynthesis pathway. This is Aspartate carbamoyltransferase catalytic subunit from Syntrophobacter fumaroxidans (strain DSM 10017 / MPOB).